The following is a 309-amino-acid chain: Ribosomal RNA small subunit methyltransferase H (309 aa).

S-adenosyl-L-methionine is bound by residues Gly41–His43, Asp61, Phe85, Asp102, and Gln109.

It belongs to the methyltransferase superfamily. RsmH family.

The protein localises to the cytoplasm. The catalysed reaction is cytidine(1402) in 16S rRNA + S-adenosyl-L-methionine = N(4)-methylcytidine(1402) in 16S rRNA + S-adenosyl-L-homocysteine + H(+). Functionally, specifically methylates the N4 position of cytidine in position 1402 (C1402) of 16S rRNA. In Albidiferax ferrireducens (strain ATCC BAA-621 / DSM 15236 / T118) (Rhodoferax ferrireducens), this protein is Ribosomal RNA small subunit methyltransferase H.